Consider the following 27-residue polypeptide: ADDKNPLEEAFREADYEVFLEIAKNGL.

Homodimer; non-covalently linked. FAD is required as a cofactor. Contains 2 disulfide bonds. In terms of processing, N-glycosylated. As to expression, expressed by the venom gland.

It is found in the secreted. It catalyses the reaction an L-alpha-amino acid + O2 + H2O = a 2-oxocarboxylate + H2O2 + NH4(+). It carries out the reaction L-leucine + O2 + H2O = 4-methyl-2-oxopentanoate + H2O2 + NH4(+). In terms of biological role, catalyzes an oxidative deamination of predominantly hydrophobic and aromatic L-amino acids, thus producing hydrogen peroxide that may contribute to the diverse toxic effects of this enzyme. Shows activity on L-Leu. Exhibits diverse biological activities, such as hemolysis, edema, apoptosis, as well as induction of platelet aggregation. Effects of snake L-amino oxidases on platelets are controversial, since they either induce aggregation or inhibit agonist-induced aggregation. These different effects are probably due to different experimental conditions. Unlike other snake venom L-amino acid oxidases, does not induce hemorrhage. This protein may also have antibacterial and antiparasitic activities. The protein is L-amino-acid oxidase of Eristicophis macmahoni (Leaf-nosed viper).